We begin with the raw amino-acid sequence, 85 residues long: Small ribosomal subunit protein bS20 (85 aa).

This sequence belongs to the bacterial ribosomal protein bS20 family.

Binds directly to 16S ribosomal RNA. The protein is Small ribosomal subunit protein bS20 of Ruminiclostridium cellulolyticum (strain ATCC 35319 / DSM 5812 / JCM 6584 / H10) (Clostridium cellulolyticum).